The primary structure comprises 191 residues: Probable chemoreceptor glutamine deamidase CheD (191 aa).

Belongs to the CheD family.

It catalyses the reaction L-glutaminyl-[protein] + H2O = L-glutamyl-[protein] + NH4(+). Probably deamidates glutamine residues to glutamate on methyl-accepting chemotaxis receptors (MCPs), playing an important role in chemotaxis. The sequence is that of Probable chemoreceptor glutamine deamidase CheD from Hydrogenovibrio crunogenus (strain DSM 25203 / XCL-2) (Thiomicrospira crunogena).